The primary structure comprises 312 residues: Ribosomal RNA small subunit methyltransferase H (312 aa).

S-adenosyl-L-methionine contacts are provided by residues alanine 32–histidine 34, aspartate 51, phenylalanine 78, aspartate 99, and glutamine 106.

The protein belongs to the methyltransferase superfamily. RsmH family.

It is found in the cytoplasm. The catalysed reaction is cytidine(1402) in 16S rRNA + S-adenosyl-L-methionine = N(4)-methylcytidine(1402) in 16S rRNA + S-adenosyl-L-homocysteine + H(+). Specifically methylates the N4 position of cytidine in position 1402 (C1402) of 16S rRNA. This is Ribosomal RNA small subunit methyltransferase H from Exiguobacterium sibiricum (strain DSM 17290 / CCUG 55495 / CIP 109462 / JCM 13490 / 255-15).